Consider the following 61-residue polypeptide: MNAKFILLLLVVATTMLLPDTQGAEVIKCRTPKDCAGPCRKQTGCPHGKCMNRTCRCNRCG.

The N-terminal stretch at 1–23 is a signal peptide; the sequence is MNAKFILLLLVVATTMLLPDTQG. Cystine bridges form between C29–C50, C35–C55, C39–C57, and C45–C60. Cysteine amide is present on C60.

This sequence belongs to the short scorpion toxin superfamily. Potassium channel inhibitor family. Alpha-KTx 06 subfamily. Expressed by the venom gland.

Its subcellular location is the secreted. Its function is as follows. Blocker of voltage-gated potassium channels. This chain is Potassium channel toxin alpha-KTx 6.6, found in Opistophthalmus carinatus (African yellow leg scorpion).